A 338-amino-acid polypeptide reads, in one-letter code: Glycerol-3-phosphate dehydrogenase [NAD(P)+] (338 aa).

Residues Ser14, Tyr15, His35, and Lys109 each contribute to the NADPH site. Sn-glycerol 3-phosphate is bound by residues Lys109, Gly138, and Thr140. Ala142 lines the NADPH pocket. Lys194, Asp247, Ser257, Arg258, and Asn259 together coordinate sn-glycerol 3-phosphate. The Proton acceptor role is filled by Lys194. Residue Arg258 coordinates NADPH. Residues Val282 and Glu284 each contribute to the NADPH site.

This sequence belongs to the NAD-dependent glycerol-3-phosphate dehydrogenase family.

The protein localises to the cytoplasm. It catalyses the reaction sn-glycerol 3-phosphate + NAD(+) = dihydroxyacetone phosphate + NADH + H(+). The catalysed reaction is sn-glycerol 3-phosphate + NADP(+) = dihydroxyacetone phosphate + NADPH + H(+). It participates in membrane lipid metabolism; glycerophospholipid metabolism. Catalyzes the reduction of the glycolytic intermediate dihydroxyacetone phosphate (DHAP) to sn-glycerol 3-phosphate (G3P), the key precursor for phospholipid synthesis. The chain is Glycerol-3-phosphate dehydrogenase [NAD(P)+] from Shewanella oneidensis (strain ATCC 700550 / JCM 31522 / CIP 106686 / LMG 19005 / NCIMB 14063 / MR-1).